Reading from the N-terminus, the 463-residue chain is A-type ATP synthase subunit B (463 aa).

It belongs to the ATPase alpha/beta chains family. In terms of assembly, has multiple subunits with at least A(3), B(3), C, D, E, F, H, I and proteolipid K(x).

The protein localises to the cell membrane. Its function is as follows. Component of the A-type ATP synthase that produces ATP from ADP in the presence of a proton gradient across the membrane. The B chain is a regulatory subunit. The sequence is that of A-type ATP synthase subunit B from Methanothermobacter thermautotrophicus (strain ATCC 29096 / DSM 1053 / JCM 10044 / NBRC 100330 / Delta H) (Methanobacterium thermoautotrophicum).